A 110-amino-acid chain; its full sequence is Small ribosomal subunit protein uS17 (110 aa).

This sequence belongs to the universal ribosomal protein uS17 family. Part of the 30S ribosomal subunit.

One of the primary rRNA binding proteins, it binds specifically to the 5'-end of 16S ribosomal RNA. The polypeptide is Small ribosomal subunit protein uS17 (Haloquadratum walsbyi (strain DSM 16790 / HBSQ001)).